The primary structure comprises 398 residues: GTPase Obg (398 aa).

The Obg domain occupies 1–159 (MKFVDEAPIS…RNLKLELKVL (159 aa)). Residues 128-148 (TRFKSSTNRVPRKTTPGTEGE) form a disordered region. An OBG-type G domain is found at 160–333 (ADVGMLGLPN…LSGKIMDHLE (174 aa)). GTP is bound by residues 166-173 (GLPNAGKS), 191-195 (FTTLV), 213-216 (DIPG), 283-286 (NKID), and 314-316 (SAL). 2 residues coordinate Mg(2+): Ser173 and Thr193.

The protein belongs to the TRAFAC class OBG-HflX-like GTPase superfamily. OBG GTPase family. Monomer. The cofactor is Mg(2+).

The protein resides in the cytoplasm. An essential GTPase which binds GTP, GDP and possibly (p)ppGpp with moderate affinity, with high nucleotide exchange rates and a fairly low GTP hydrolysis rate. Plays a role in control of the cell cycle, stress response, ribosome biogenesis and in those bacteria that undergo differentiation, in morphogenesis control. This is GTPase Obg from Cellvibrio japonicus (strain Ueda107) (Pseudomonas fluorescens subsp. cellulosa).